Here is a 344-residue protein sequence, read N- to C-terminus: Estradiol 17-beta-dehydrogenase 1 (344 aa).

Residue 3–32 coordinates NAD(+); the sequence is STVVLITGCSSGIGLHLAVRLASDRSQSFK. Ser143 is a binding site for substrate. The active-site Proton acceptor is the Tyr156.

Belongs to the short-chain dehydrogenases/reductases (SDR) family. As to quaternary structure, homodimer.

It is found in the cytoplasm. It carries out the reaction 17beta-estradiol + NAD(+) = estrone + NADH + H(+). The enzyme catalyses 17beta-estradiol + NADP(+) = estrone + NADPH + H(+). It participates in steroid biosynthesis; estrogen biosynthesis. Functionally, favors the reduction of estrogens and androgens. Uses preferentially NADH. The polypeptide is Estradiol 17-beta-dehydrogenase 1 (Hsd17b1) (Rattus norvegicus (Rat)).